The primary structure comprises 308 residues: Inactive C-alpha-formylglycine-generating enzyme 2 (308 aa).

A signal peptide spans 1 to 33; that stretch reads MRSEFWFPSMGSLLPPVLLLWLLSCPRLQLGHA. Cys163 and Cys297 are joined by a disulfide. The N-linked (GlcNAc...) asparagine glycan is linked to Asn198. Positions 201, 202, 215, 217, 236, 239, 241, and 243 each coordinate Ca(2+). The segment covering 281–291 has biased composition (polar residues); sequence RMGNTPDSASD. Residues 281-308 form a disordered region; sequence RMGNTPDSASDNLGFRCASSAGRPKEDL. Positions 305 to 308 match the Non-canonical ER retention motif motif; the sequence is KEDL.

The protein belongs to the sulfatase-modifying factor family. As to quaternary structure, homodimer and heterodimer with SUMF1.

Its subcellular location is the endoplasmic reticulum lumen. Its function is as follows. Lacks formylglycine generating activity and is unable to convert newly synthesized inactive sulfatases to their active form. Inhibits the activation of sulfatases by SUMF1. The polypeptide is Inactive C-alpha-formylglycine-generating enzyme 2 (Mus musculus (Mouse)).